We begin with the raw amino-acid sequence, 445 residues long: Phosphoglucosamine mutase (445 aa).

The active-site Phosphoserine intermediate is Ser-102. Mg(2+) is bound by residues Ser-102, Asp-241, Asp-243, and Asp-245. Residue Ser-102 is modified to Phosphoserine.

Belongs to the phosphohexose mutase family. Requires Mg(2+) as cofactor. Activated by phosphorylation.

The enzyme catalyses alpha-D-glucosamine 1-phosphate = D-glucosamine 6-phosphate. Catalyzes the conversion of glucosamine-6-phosphate to glucosamine-1-phosphate. The polypeptide is Phosphoglucosamine mutase (Sodalis glossinidius (strain morsitans)).